A 302-amino-acid polypeptide reads, in one-letter code: Cyclin-C (302 aa).

The Cyclin N-terminal domain maps to 46–152 (NFITAVATEG…VYDSEFILVE (107 aa)). The tract at residues 281–302 (LPKPNQQPPPQQQHQHQQGYHL) is disordered. Residues 292–302 (QQHQHQQGYHL) are compositionally biased toward low complexity.

The protein belongs to the cyclin family. Cyclin C subfamily. As to quaternary structure, component of the Mediator complex.

The protein localises to the nucleus. Its function is as follows. Component of the Mediator complex, a coactivator involved in regulated gene transcription of nearly all RNA polymerase II-dependent genes. Mediator functions as a bridge to convey information from gene-specific regulatory proteins to the basal RNA polymerase II transcription machinery. Mediator is recruited to promoters by direct interactions with regulatory proteins and serves as a scaffold for the assembly of a functional preinitiation complex with RNA polymerase II and the general transcription factors. Binds to and activates cyclin-dependent kinase cdk-8 that phosphorylates the CTD (C-terminal domain) of the large subunit of RNA polymerase II (RNAp II), which may inhibit the formation of a transcription initiation complex. This Caenorhabditis elegans protein is Cyclin-C (cic-1).